An 87-amino-acid chain; its full sequence is Neutrophil antibiotic peptide NP-3B (87 aa).

The signal sequence occupies residues 1-19; the sequence is MRTLILLTTLLLLALHTQA. Positions 20–58 are excised as a propeptide; that stretch reads ESPQGSTKEAPDEEQDISVFFGGDKGTALQDAAVKAGVT. 3 disulfides stabilise this stretch: Cys-59/Cys-87, Cys-61/Cys-76, and Cys-66/Cys-86.

This sequence belongs to the alpha-defensin family.

The protein localises to the secreted. Active in vitro against S.aureus, fungi, Gram-positive and Gram-negative bacteria and to a lesser extent against an enveloped virus. This Rattus norvegicus (Rat) protein is Neutrophil antibiotic peptide NP-3B.